Reading from the N-terminus, the 558-residue chain is MARVEL domain-containing protein 2 (558 aa).

Positions 1–16 (MSNDGRSRNRDRRYDE) are enriched in basic and acidic residues. Disordered regions lie at residues 1–58 (MSND…PPFG) and 115–145 (CSPP…GTFS). The Cytoplasmic portion of the chain corresponds to 1–194 (MSNDGRSRNR…YMKSWAGLLR (194 aa)). Residues 45-58 (PLPPPPLPLQPPFG) are compositionally biased toward pro residues. Residues serine 116, serine 120, and serine 161 each carry the phosphoserine modification. Position 166 is a phosphothreonine (threonine 166). Residues 188 to 367 (SWAGLLRILG…SALVCLKLWR (180 aa)) form the MARVEL domain. The helical transmembrane segment at 195 to 215 (ILGVVELLLGAGVFACVTAYI) threads the bilayer. At 216–223 (HKDSEWYN) the chain is on the extracellular side. Residues 224 to 244 (LFGYSQPYGMGGVGGLGSMYG) traverse the membrane as a helical segment. The Cytoplasmic segment spans residues 245-254 (GYYYTGPKTP). The chain crosses the membrane as a helical span at residues 255 to 275 (FVLVVAGLAWITTIIILVLGM). The Extracellular portion of the chain corresponds to 276–291 (SMYYRTILLDSNWWPL). Residues 292 to 312 (TEFGINVALFILYMAAAIVYV) form a helical membrane-spanning segment. Residues 313–319 (NDTNRGG) are Cytoplasmic-facing. The helical transmembrane segment at 320-337 (LCYYPLFNTPVNAVFCRV) threads the bilayer. Topologically, residues 338 to 341 (EGGQ) are extracellular. Residues 342 to 362 (IAAMIFLFVTMIVYLISALVC) form a helical membrane-spanning segment. At 363–558 (LKLWRHEAAR…VMNWDVQGYS (196 aa)) the chain is on the cytoplasmic side. Residue serine 387 is modified to Phosphoserine. Residue lysine 412 forms a Glycyl lysine isopeptide (Lys-Gly) (interchain with G-Cter in ubiquitin) linkage. Residues 439–548 (MPDYVAKYPV…IKQRIQEYDK (110 aa)) adopt a coiled-coil conformation. Residues 440–551 (PDYVAKYPVI…RIQEYDKVMN (112 aa)) form the OCEL domain.

It belongs to the ELL/occludin family. In terms of assembly, interacts with TJP1. Interacts with the ubiquitin ligase ITCH. Interacts (via C-terminal cytoplasmic domain) with LSR (via the cytoplasmic domain), ILDR1 and ILDR2; the interaction is required to recruit MARVELD2 to tricellular contacts. In terms of processing, ubiquitinated by ITCH; but this ubiquitination does not lead to proteasomal degradation. Polyubiquitinated at Lys-412 via 'Lys-63'-linked ubiquitin chains; deubiquitinated by USP53. Phosphorylated.

The protein resides in the cell membrane. It localises to the cell junction. The protein localises to the tight junction. In terms of biological role, plays a role in the formation of tricellular tight junctions and of epithelial barriers. Required for normal hearing via its role in the separation of the endolymphatic and perilymphatic spaces of the organ of Corti in the inner ear, and for normal survival of hair cells in the organ of Corti. The chain is MARVEL domain-containing protein 2 from Homo sapiens (Human).